Here is a 585-residue protein sequence, read N- to C-terminus: Protein NRT1/ PTR FAMILY 4.6 (585 aa).

Helical transmembrane passes span 28–48 (GMLA…AYLA), 75–95 (FMGT…AFFS), 96–116 (TFQI…ILTI), 142–162 (AMLF…KGSL), 184–204 (FFNY…TFVV), 211–231 (GWEW…LIFL), 343–363 (IVLK…CLAQ), 391–411 (IFPV…IIPF), 428–448 (IGVG…VEIK), 465–485 (LPVT…ADLF), 508–528 (SLSW…VSIV), and 554–574 (FYWL…FWAM).

Belongs to the major facilitator superfamily. Proton-dependent oligopeptide transporter (POT/PTR) (TC 2.A.17) family. Expressed in root hairs and in epidermis of both root tips and mature regions of roots. Detected in shoots, stems, flowers, siliques and imbibed seeds. Expressed in vascular tissues in cotyledons, trus leaves, hypocotyls, roots and inflorescence stems.

It localises to the cell membrane. Its function is as follows. Low-affinity proton-dependent nitrate transporter. Involved in constitutive nitrate uptake. Not involved in histidine or dipeptides transport. Involved in (+)-abscisic acid (ABA) transport, but not in gibberellin, indole-3-acetic acid or jasmonic acid import. Mediates cellular ABA uptake. Nitrate does not compete with abscisic acid as a substrate of NPF4.6. The protein is Protein NRT1/ PTR FAMILY 4.6 (NPF4.6) of Arabidopsis thaliana (Mouse-ear cress).